A 79-amino-acid chain; its full sequence is D-alanyl carrier protein (79 aa).

The Carrier domain maps to 1-77; sequence MSIEETVIEL…KIVQGVEELQ (77 aa). The residue at position 35 (Ser-35) is an O-(pantetheine 4'-phosphoryl)serine.

The protein belongs to the DltC family. In terms of processing, 4'-phosphopantetheine is transferred from CoA to a specific serine of apo-DCP.

It is found in the cytoplasm. Its pathway is cell wall biogenesis; lipoteichoic acid biosynthesis. Carrier protein involved in the D-alanylation of lipoteichoic acid (LTA). The loading of thioester-linked D-alanine onto DltC is catalyzed by D-alanine--D-alanyl carrier protein ligase DltA. The DltC-carried D-alanyl group is further transferred to cell membrane phosphatidylglycerol (PG) by forming an ester bond, probably catalyzed by DltD. D-alanylation of LTA plays an important role in modulating the properties of the cell wall in Gram-positive bacteria, influencing the net charge of the cell wall. In Streptococcus pyogenes serotype M1, this protein is D-alanyl carrier protein.